The chain runs to 444 residues: Probable D-serine dehydratase (444 aa).

The residue at position 110 (Lys110) is an N6-(pyridoxal phosphate)lysine.

It belongs to the serine/threonine dehydratase family. DsdA subfamily. It depends on pyridoxal 5'-phosphate as a cofactor.

It catalyses the reaction D-serine = pyruvate + NH4(+). This chain is Probable D-serine dehydratase, found in Burkholderia thailandensis (strain ATCC 700388 / DSM 13276 / CCUG 48851 / CIP 106301 / E264).